A 387-amino-acid polypeptide reads, in one-letter code: 3-ketoacyl-CoA thiolase (387 aa).

Cys-91 (acyl-thioester intermediate) is an active-site residue. Residues His-343 and Cys-373 each act as proton acceptor in the active site.

This sequence belongs to the thiolase-like superfamily. Thiolase family. As to quaternary structure, heterotetramer of two alpha chains (FadB) and two beta chains (FadA).

Its subcellular location is the cytoplasm. It catalyses the reaction an acyl-CoA + acetyl-CoA = a 3-oxoacyl-CoA + CoA. It functions in the pathway lipid metabolism; fatty acid beta-oxidation. Its function is as follows. Catalyzes the final step of fatty acid oxidation in which acetyl-CoA is released and the CoA ester of a fatty acid two carbons shorter is formed. The chain is 3-ketoacyl-CoA thiolase from Photobacterium profundum (strain SS9).